Here is an 874-residue protein sequence, read N- to C-terminus: Trimodular acetylaranotin synthesis protein ataIMG (874 aa).

Residues 1–339 (MANLSGLSNR…DSGLLRASSI (339 aa)) are aminotransferase ataI. The disordered stretch occupies residues 20–39 (RFGFQTTQQAKPTESSKTPI). Polar residues predominate over residues 23–37 (FQTTQQAKPTESSKT). The interval 340–668 (SYNSMVKGSS…QERTEAEWRT (329 aa)) is O-methyltransferase ataM. Position 625 (D625) interacts with S-adenosyl-L-methionine. The tract at residues 669–874 (LAGRTGWEIR…VMEMGPQIGH (206 aa)) is glutathione S-transferase ataG. Residues 699 to 766 (KPLILAHELE…YLADRFDDGT (68 aa)) enclose the GST N-terminal domain. The GST C-terminal domain occupies 739–874 (DPETKAEVIV…VMEMGPQIGH (136 aa)).

The protein in the N-terminal section; belongs to the class-I pyridoxal-phosphate-dependent aminotransferase family. It in the 2nd section; belongs to the class I-like SAM-binding methyltransferase superfamily. Cation-independent O-methyltransferase family. In the C-terminal section; belongs to the GST superfamily. Requires pyridoxal 5'-phosphate as cofactor.

The catalysed reaction is RX + glutathione = an S-substituted glutathione + a halide anion + H(+). Its pathway is mycotoxin biosynthesis. Its function is as follows. Trimodular acetylaranotin synthesis protein; part of the gene cluster that mediates the biosynthesis of acetylaranotin, a member of the epipolythiodioxopiperazine (ETP) class of toxins characterized by a disulfide-bridged cyclic dipeptide. The first step of acetylaranotin biosynthesis is performed by the NRPS ataP which produces diketopiperazine cyclo-L-Phe-L-Phe via the condensation of 2 phenylalanines (L-Phe). The ataC domain of ataTC then catalyzes the formation of bishydroxylation of cyclo-L-Phe-L-Phe. The glutathione S-transferase domain ataG in ataIMG further catalyzes the conjugation of two glutathiones to the bishydroxylated intermediate. Next, the dipeptidase ataJ removes the Glu residues. The following step is performed by the carbon sulfur lyase domain ataI of ataIMG which may convert the bis-cysteinyl adduct to yield an epidithiol intermediate. The ataT domain from ataTC then catalyzes the oxidation of the free dithiols, followed by a cyclization step catalyzed by the cytochrome P450 ataF. AtaF probably acts as an epoxidase to promote a dual epoxidation formation at C8 and C9 along with C8' and C9', followed by the spontaneous nucleophilic attack of the amide nitrogens N10 and N10' to yield an intermediate with the pyrrolidine partial structure. The final steps of acetylaranotin biosynthesis involve the acetylation and ring rearrangement of an epitetrathiodiketopiperazine intermediate to produce acetylaranotin. AtaH probably catalyzes the acetylation of epitetrathiodiketopiperazine to produce a diacetate and ataY is responsible for the formation of the dihydrooxepin moiety that converts the diacetate intermediate to acetylaranotin via acetylapoaranotin. Both enzymes could function independently in the absence of the other. The acetylaranotin bis-thiomethyltransferase ataS located outside of acetylaranotin gene cluster is the main thiomethyltransferase responsible for converting acetylaranotin and its related intermediates to their methylated forms. This chain is Trimodular acetylaranotin synthesis protein ataIMG, found in Aspergillus terreus (strain NIH 2624 / FGSC A1156).